Reading from the N-terminus, the 98-residue chain is NADH-ubiquinone oxidoreductase chain 4L (98 aa).

Transmembrane regions (helical) follow at residues 1–21 (MASI…GVLI), 26–46 (LMST…MMTL), and 59–79 (APLI…ALLV).

Belongs to the complex I subunit 4L family. As to quaternary structure, core subunit of respiratory chain NADH dehydrogenase (Complex I) which is composed of 45 different subunits.

It localises to the mitochondrion inner membrane. It carries out the reaction a ubiquinone + NADH + 5 H(+)(in) = a ubiquinol + NAD(+) + 4 H(+)(out). Functionally, core subunit of the mitochondrial membrane respiratory chain NADH dehydrogenase (Complex I) which catalyzes electron transfer from NADH through the respiratory chain, using ubiquinone as an electron acceptor. Part of the enzyme membrane arm which is embedded in the lipid bilayer and involved in proton translocation. This is NADH-ubiquinone oxidoreductase chain 4L (MT-ND4L) from Caenolestes fuliginosus (Shrew opossum).